A 527-amino-acid polypeptide reads, in one-letter code: MTERRDNVSHAPDAIEGPNDGAHAEDTSPGFFSLENLGVAQVQVVGGTLNGYVIGYVAVYLLLYLTATECKFTTEGACGGRKIYGCKWSGTTCKFENPKCSEGSDPSDSCKNEVAYTSVYSGIFACAMIVGSMVGSIIAGKCITTFGLKKSFIIVSITCTIACVVVQVAIEYNNYYALCTGRVLIGLGVGILCSVFPMYVNENAHPKLCKMDGVLFQVFTTLGIMLAAMLGLILDKTGASKEEANMAGRLHVFSAVPLGLSVAMFLVGMFLRESTATFAQDDDGKADGGMDPNEYGWGQMLWPLFMGAVTAGTLQLTGINAVMNYAPKITENLGMDPSLGNFLVMAWNFVTSLVAIPLASRFTMRQMFITCSFVASCMCLFLCGIPVFPGVAGKEVKNGVATTGIALFIAAFEFGVGSCFFVLAQDLFPPSFRPKGGSFVVMMQFIFNILINLLYPITTEAISGGATGNQDKGQAVAFILFGLIGLICSVLQFFYLYPYDANQDHENDHGGEPVEQKTYPVEASPRN.

The disordered stretch occupies residues 1 to 22 (MTERRDNVSHAPDAIEGPNDGA). Residues 1–43 (MTERRDNVSHAPDAIEGPNDGAHAEDTSPGFFSLENLGVAQVQ) lie on the Cytoplasmic side of the membrane. The helical transmembrane segment at 44-64 (VVGGTLNGYVIGYVAVYLLLY) threads the bilayer. Residues 65 to 118 (LTATECKFTTEGACGGRKIYGCKWSGTTCKFENPKCSEGSDPSDSCKNEVAYTS) are Extracellular-facing. A helical membrane pass occupies residues 119–139 (VYSGIFACAMIVGSMVGSIIA). Over 140 to 151 (GKCITTFGLKKS) the chain is Cytoplasmic. Residues 152-172 (FIIVSITCTIACVVVQVAIEY) traverse the membrane as a helical segment. The Extracellular segment spans residues 173 to 175 (NNY). The chain crosses the membrane as a helical span at residues 176–196 (YALCTGRVLIGLGVGILCSVF). At 197–213 (PMYVNENAHPKLCKMDG) the chain is on the cytoplasmic side. Residues 214 to 234 (VLFQVFTTLGIMLAAMLGLIL) traverse the membrane as a helical segment. Over 235–249 (DKTGASKEEANMAGR) the chain is Extracellular. A helical membrane pass occupies residues 250–270 (LHVFSAVPLGLSVAMFLVGMF). Over 271–299 (LRESTATFAQDDDGKADGGMDPNEYGWGQ) the chain is Cytoplasmic. The helical transmembrane segment at 300–320 (MLWPLFMGAVTAGTLQLTGIN) threads the bilayer. Residues 321 to 338 (AVMNYAPKITENLGMDPS) are Extracellular-facing. Residues 339–359 (LGNFLVMAWNFVTSLVAIPLA) form a helical membrane-spanning segment. At 360 to 372 (SRFTMRQMFITCS) the chain is on the cytoplasmic side. A helical membrane pass occupies residues 373–393 (FVASCMCLFLCGIPVFPGVAG). Topologically, residues 394 to 403 (KEVKNGVATT) are extracellular. The chain crosses the membrane as a helical span at residues 404–424 (GIALFIAAFEFGVGSCFFVLA). Residues 425 to 436 (QDLFPPSFRPKG) lie on the Cytoplasmic side of the membrane. Residues 437 to 457 (GSFVVMMQFIFNILINLLYPI) traverse the membrane as a helical segment. At 458–475 (TTEAISGGATGNQDKGQA) the chain is on the extracellular side. The chain crosses the membrane as a helical span at residues 476–496 (VAFILFGLIGLICSVLQFFYL). The Cytoplasmic segment spans residues 497–527 (YPYDANQDHENDHGGEPVEQKTYPVEASPRN). Residues 506-515 (ENDHGGEPVE) show a composition bias toward basic and acidic residues. The interval 506–527 (ENDHGGEPVEQKTYPVEASPRN) is disordered.

The protein belongs to the major facilitator superfamily. Sugar transporter (TC 2.A.1.1) family.

Its subcellular location is the membrane. In terms of biological role, facilitative glucose transporter. This chain is Glucose transporter 1B/1C/1D/1F/2B (THT1B), found in Trypanosoma brucei brucei.